The chain runs to 234 residues: Opacity protein opA56 (234 aa).

Alanine 1 is a signal peptide.

It belongs to the opacity porin family.

The protein resides in the cell outer membrane. Implicated in a number of adherence functions. OPA proteins are implicated in pathogenesis and are subject to phase variation. This is Opacity protein opA56 (opaF) from Neisseria gonorrhoeae.